A 313-amino-acid polypeptide reads, in one-letter code: Aspartate carbamoyltransferase catalytic subunit (313 aa).

Residues Arg59 and Thr60 each coordinate carbamoyl phosphate. Residue Lys87 coordinates L-aspartate. 3 residues coordinate carbamoyl phosphate: Arg109, His137, and Gln140. Residues Arg170 and Arg224 each coordinate L-aspartate. The carbamoyl phosphate site is built by Gly265 and Pro266.

It belongs to the aspartate/ornithine carbamoyltransferase superfamily. ATCase family. Heterododecamer (2C3:3R2) of six catalytic PyrB chains organized as two trimers (C3), and six regulatory PyrI chains organized as three dimers (R2).

It carries out the reaction carbamoyl phosphate + L-aspartate = N-carbamoyl-L-aspartate + phosphate + H(+). It functions in the pathway pyrimidine metabolism; UMP biosynthesis via de novo pathway; (S)-dihydroorotate from bicarbonate: step 2/3. Its function is as follows. Catalyzes the condensation of carbamoyl phosphate and aspartate to form carbamoyl aspartate and inorganic phosphate, the committed step in the de novo pyrimidine nucleotide biosynthesis pathway. The protein is Aspartate carbamoyltransferase catalytic subunit of Sinorhizobium medicae (strain WSM419) (Ensifer medicae).